Here is a 165-residue protein sequence, read N- to C-terminus: UPF0254 protein MmarC5_0742 (165 aa).

The protein belongs to the UPF0254 family.

This chain is UPF0254 protein MmarC5_0742, found in Methanococcus maripaludis (strain C5 / ATCC BAA-1333).